We begin with the raw amino-acid sequence, 259 residues long: Hemin import ATP-binding protein HmuV (259 aa).

The region spanning Ile8–Lys242 is the ABC transporter domain. Gly40–Ser47 lines the ATP pocket.

The protein belongs to the ABC transporter superfamily. Heme (hemin) importer (TC 3.A.1.14.5) family. The complex is composed of two ATP-binding proteins (HmuV), two transmembrane proteins (HmuU) and a solute-binding protein (HmuT).

The protein resides in the cell inner membrane. Functionally, part of the ABC transporter complex HmuTUV involved in hemin import. Responsible for energy coupling to the transport system. The sequence is that of Hemin import ATP-binding protein HmuV from Aliivibrio fischeri (strain ATCC 700601 / ES114) (Vibrio fischeri).